Here is a 388-residue protein sequence, read N- to C-terminus: Acyl-[acyl-carrier-protein] dehydrogenase MbtN (388 aa).

It belongs to the acyl-CoA dehydrogenase family. It depends on FAD as a cofactor.

It functions in the pathway siderophore biosynthesis; mycobactin biosynthesis. Functionally, catalyzes the dehydrogenation at the alpha-beta position of ACP-bound acyl chains. This results in the introduction of a double bond in the lipidic chain, which is further transferred to the epsilon-amino group of lysine residue in the mycobactin core by MbtK. The polypeptide is Acyl-[acyl-carrier-protein] dehydrogenase MbtN (mbtN) (Mycolicibacterium paratuberculosis (strain ATCC BAA-968 / K-10) (Mycobacterium paratuberculosis)).